We begin with the raw amino-acid sequence, 380 residues long: Cytochrome b (380 aa).

4 consecutive transmembrane segments (helical) span residues 33 to 53, 77 to 98, 113 to 133, and 178 to 198; these read FGSL…FLAM, WLIR…FLHV, WNMG…GYVL, and FFAF…VHLL. Heme b contacts are provided by His-83 and His-97. Positions 182 and 196 each coordinate heme b. A ubiquinone is bound at residue His-201. The next 4 helical transmembrane spans lie at 226–246, 288–308, 320–340, and 347–367; these read IKDL…VLFF, LGGV…PLLH, ITQT…WIGG, and FIMI…IFMP.

This sequence belongs to the cytochrome b family. In terms of assembly, the cytochrome bc1 complex contains 11 subunits: 3 respiratory subunits (MT-CYB, CYC1 and UQCRFS1), 2 core proteins (UQCRC1 and UQCRC2) and 6 low-molecular weight proteins (UQCRH/QCR6, UQCRB/QCR7, UQCRQ/QCR8, UQCR10/QCR9, UQCR11/QCR10 and a cleavage product of UQCRFS1). This cytochrome bc1 complex then forms a dimer. Heme b is required as a cofactor.

The protein resides in the mitochondrion inner membrane. In terms of biological role, component of the ubiquinol-cytochrome c reductase complex (complex III or cytochrome b-c1 complex) that is part of the mitochondrial respiratory chain. The b-c1 complex mediates electron transfer from ubiquinol to cytochrome c. Contributes to the generation of a proton gradient across the mitochondrial membrane that is then used for ATP synthesis. This is Cytochrome b (MT-CYB) from Synaptomys borealis (Northern bog lemming).